Here is a 117-residue protein sequence, read N- to C-terminus: Ig heavy chain V region 108A (117 aa).

Residues 1-19 (MGWSWIFLFLLSGTAGVHS) form the signal peptide. Positions 20–117 (EVQLQQSGPE…EDSAVYYCAR (98 aa)) constitute an Ig-like domain.

This is Ig heavy chain V region 108A (Igh-VJ558) from Mus musculus (Mouse).